Consider the following 925-residue polypeptide: Protein translocase subunit SecA (925 aa).

ATP-binding positions include Gln87, 105–109 (GEGKT), and Asp515. Residues Cys909, Cys911, Cys920, and His921 each contribute to the Zn(2+) site.

The protein belongs to the SecA family. In terms of assembly, monomer and homodimer. Part of the essential Sec protein translocation apparatus which comprises SecA, SecYEG and auxiliary proteins SecDF-YajC and YidC. Zn(2+) is required as a cofactor.

The protein resides in the cell inner membrane. It is found in the cytoplasm. It catalyses the reaction ATP + H2O + cellular proteinSide 1 = ADP + phosphate + cellular proteinSide 2.. Part of the Sec protein translocase complex. Interacts with the SecYEG preprotein conducting channel. Has a central role in coupling the hydrolysis of ATP to the transfer of proteins into and across the cell membrane, serving both as a receptor for the preprotein-SecB complex and as an ATP-driven molecular motor driving the stepwise translocation of polypeptide chains across the membrane. This chain is Protein translocase subunit SecA, found in Cupriavidus necator (strain ATCC 17699 / DSM 428 / KCTC 22496 / NCIMB 10442 / H16 / Stanier 337) (Ralstonia eutropha).